Consider the following 509-residue polypeptide: 2-isopropylmalate synthase (509 aa).

Positions 5–267 constitute a Pyruvate carboxyltransferase domain; the sequence is IQIFDTTLRD…QTALNLEETK (263 aa). The Mn(2+) site is built by aspartate 14, histidine 202, histidine 204, and asparagine 238. The tract at residues 391–509 is regulatory domain; it reads KLETLQLQYV…AAENVEKVGN (119 aa).

The protein belongs to the alpha-IPM synthase/homocitrate synthase family. LeuA type 1 subfamily. In terms of assembly, homodimer. Requires Mn(2+) as cofactor.

It localises to the cytoplasm. It catalyses the reaction 3-methyl-2-oxobutanoate + acetyl-CoA + H2O = (2S)-2-isopropylmalate + CoA + H(+). The protein operates within amino-acid biosynthesis; L-leucine biosynthesis; L-leucine from 3-methyl-2-oxobutanoate: step 1/4. Its function is as follows. Catalyzes the condensation of the acetyl group of acetyl-CoA with 3-methyl-2-oxobutanoate (2-ketoisovalerate) to form 3-carboxy-3-hydroxy-4-methylpentanoate (2-isopropylmalate). The protein is 2-isopropylmalate synthase of Staphylococcus aureus (strain MW2).